The chain runs to 79 residues: Small ribosomal subunit protein bS18 (79 aa).

This sequence belongs to the bacterial ribosomal protein bS18 family. In terms of assembly, part of the 30S ribosomal subunit. Forms a tight heterodimer with protein bS6.

Functionally, binds as a heterodimer with protein bS6 to the central domain of the 16S rRNA, where it helps stabilize the platform of the 30S subunit. This is Small ribosomal subunit protein bS18 from Bacillus licheniformis (strain ATCC 14580 / DSM 13 / JCM 2505 / CCUG 7422 / NBRC 12200 / NCIMB 9375 / NCTC 10341 / NRRL NRS-1264 / Gibson 46).